A 72-amino-acid polypeptide reads, in one-letter code: MAKEDCIEMQGTILETLPNTMFRVELENGHVVTAHISGKMRKNYIRILTGDKVTIEMTPYDLNKGRIIFRSR.

Positions 2 to 72 constitute an S1-like domain; that stretch reads AKEDCIEMQG…NKGRIIFRSR (71 aa).

This sequence belongs to the IF-1 family. In terms of assembly, component of the 30S ribosomal translation pre-initiation complex which assembles on the 30S ribosome in the order IF-2 and IF-3, IF-1 and N-formylmethionyl-tRNA(fMet); mRNA recruitment can occur at any time during PIC assembly.

It localises to the cytoplasm. One of the essential components for the initiation of protein synthesis. Stabilizes the binding of IF-2 and IF-3 on the 30S subunit to which N-formylmethionyl-tRNA(fMet) subsequently binds. Helps modulate mRNA selection, yielding the 30S pre-initiation complex (PIC). Upon addition of the 50S ribosomal subunit IF-1, IF-2 and IF-3 are released leaving the mature 70S translation initiation complex. This is Translation initiation factor IF-1 from Pasteurella multocida (strain Pm70).